A 507-amino-acid polypeptide reads, in one-letter code: Phospho-2-dehydro-3-deoxyheptonate aldolase 2, chloroplastic (507 aa).

This sequence belongs to the class-II DAHP synthase family.

It localises to the plastid. It is found in the chloroplast. The catalysed reaction is D-erythrose 4-phosphate + phosphoenolpyruvate + H2O = 7-phospho-2-dehydro-3-deoxy-D-arabino-heptonate + phosphate. It participates in metabolic intermediate biosynthesis; chorismate biosynthesis; chorismate from D-erythrose 4-phosphate and phosphoenolpyruvate: step 1/7. The polypeptide is Phospho-2-dehydro-3-deoxyheptonate aldolase 2, chloroplastic (DHS2) (Arabidopsis thaliana (Mouse-ear cress)).